The sequence spans 338 residues: tRNA pseudouridine synthase D (338 aa).

Asp79 functions as the Nucleophile in the catalytic mechanism. The TRUD domain maps to 154 to 303 (GVPNYFGEQR…EEAWRANILY (150 aa)).

This sequence belongs to the pseudouridine synthase TruD family.

It carries out the reaction uridine(13) in tRNA = pseudouridine(13) in tRNA. Responsible for synthesis of pseudouridine from uracil-13 in transfer RNAs. The polypeptide is tRNA pseudouridine synthase D (Legionella pneumophila (strain Lens)).